The following is a 403-amino-acid chain: S-adenosylmethionine synthase (403 aa).

Position 16 (H16) interacts with ATP. Mg(2+) is bound at residue D18. E44 lines the K(+) pocket. E57 and Q110 together coordinate L-methionine. The flexible loop stretch occupies residues 110–120 (QSAHIAQGVDA). ATP-binding positions include 175–177 (DSK), D253, 259–260 (RK), A276, and K280. D253 provides a ligand contact to L-methionine. K284 contacts L-methionine.

Belongs to the AdoMet synthase family. As to quaternary structure, homotetramer; dimer of dimers. Mg(2+) serves as cofactor. It depends on K(+) as a cofactor.

It is found in the cytoplasm. It catalyses the reaction L-methionine + ATP + H2O = S-adenosyl-L-methionine + phosphate + diphosphate. Its pathway is amino-acid biosynthesis; S-adenosyl-L-methionine biosynthesis; S-adenosyl-L-methionine from L-methionine: step 1/1. Functionally, catalyzes the formation of S-adenosylmethionine (AdoMet) from methionine and ATP. The overall synthetic reaction is composed of two sequential steps, AdoMet formation and the subsequent tripolyphosphate hydrolysis which occurs prior to release of AdoMet from the enzyme. The sequence is that of S-adenosylmethionine synthase from Erythrobacter litoralis (strain HTCC2594).